A 331-amino-acid polypeptide reads, in one-letter code: Vitamin B12 import system permease protein BtuC (331 aa).

9 helical membrane passes run 20–42, 62–84, 91–113, 117–136, 148–170, 190–209, 240–262, 277–299, and 306–325; these read LLIG…WLSP, LLAA…VLLG, GVVG…FPSL, VAFM…LLVV, LLLV…FYFS, SWYQ…WLVL, LAIA…VGLV, LLLP…IARL, and LPLG…WMLV.

This sequence belongs to the binding-protein-dependent transport system permease family. FecCD subfamily. In terms of assembly, the complex is composed of two ATP-binding proteins (BtuD), two transmembrane proteins (BtuC) and a solute-binding protein (BtuF).

The protein resides in the cell inner membrane. Functionally, part of the ABC transporter complex BtuCDF involved in vitamin B12 import. Involved in the translocation of the substrate across the membrane. This is Vitamin B12 import system permease protein BtuC from Vibrio cholerae serotype O1 (strain ATCC 39315 / El Tor Inaba N16961).